A 784-amino-acid chain; its full sequence is LPS-assembly protein LptD (784 aa).

Positions 1 to 24 are cleaved as a signal peptide; that stretch reads MKKRIPTLLATMIATALYSQQGLA. Intrachain disulfides connect Cys31-Cys724 and Cys173-Cys725.

The protein belongs to the LptD family. In terms of assembly, component of the lipopolysaccharide transport and assembly complex. Interacts with LptE and LptA. In terms of processing, contains two intramolecular disulfide bonds.

It is found in the cell outer membrane. Its function is as follows. Together with LptE, is involved in the assembly of lipopolysaccharide (LPS) at the surface of the outer membrane. This is LPS-assembly protein LptD from Shigella flexneri serotype 5b (strain 8401).